A 2395-amino-acid chain; its full sequence is Centrosomal protein of 295 kDa (2395 aa).

The tract at residues 1–540 (MKRKVMNGKL…KQADHLEVRP (540 aa)) is necessary for centriole targeting and microtubule association. Residue Ser-13 is modified to Phosphoserine. Coiled coils occupy residues 53–84 (QRRN…LEKL), 114–148 (AERK…HIKA), 209–277 (DAHL…KRQT), 488–538 (ARHK…HLEV), and 567–592 (QQNR…VLKE). Disordered regions lie at residues 602–643 (LIPD…PVQP), 660–681 (GHIP…SQER), and 735–764 (SDSQ…LMPE). Ser-634 is modified (phosphoserine). The segment covering 735–750 (SDSQQISSEDSENISS) has biased composition (low complexity). Residues 817–848 (GQLELQKKVLQERQEAQEKLLSCTQKELEEQT) are a coiled coil. Disordered stretches follow at residues 864–893 (SLPS…SMDN), 966–986 (ADTQ…KGLL), and 1212–1272 (VDPE…SKVT). A compositionally biased stretch (polar residues) spans 1219-1250 (FQFSPQTQENRSSQQTGFSSFTPSLRQPSCVS). A coiled-coil region spans residues 1444-1488 (HDDLQALQQQLDVHREAIRSCQDIQEELLLQRLNKLEQRVSSKQI). The residue at position 1565 (Ser-1565) is a Phosphoserine. Residues 1677-1692 (PWGDSSQGSSSGDQPG) show a composition bias toward low complexity. 5 disordered regions span residues 1677 to 1715 (PWGD…RASK), 1819 to 1845 (SEEE…ETQE), 1875 to 1899 (ESFS…GSLS), 1989 to 2013 (DLSS…SSEK), and 2354 to 2395 (NKTP…SQCI). Residues 1697-1710 (HAEHSGESLGKELS) are compositionally biased toward basic and acidic residues. Residues 1880–1894 (QTEHQEQESSSKEEE) are compositionally biased toward basic and acidic residues. The segment at 2329 to 2395 (SLGEAFMKRK…TAKRNRSQCI (67 aa)) is ALMS motif. The segment covering 2376-2388 (HLKEAVSGDETAK) has biased composition (basic and acidic residues).

In terms of assembly, interacts (via ALMS motif) with microtubules; this interaction is direct.

The protein resides in the cytoplasm. The protein localises to the cytoskeleton. It localises to the microtubule organizing center. Its subcellular location is the centrosome. It is found in the centriole. The protein resides in the spindle. Functionally, centriole-enriched microtubule-binding protein involved in centriole biogenesis. Essential for the generation of the distal portion of new-born centrioles in a CPAP- and CEP120-mediated elongation dependent manner during the cell cycle S/G2 phase after formation of the initiating cartwheel structure. Required for the recruitment of centriolar proteins, such as POC1B, POC5 and CEP135, into the distal portion of centrioles. Also required for centriole-to-centrosome conversion during mitotic progression, but is dispensable for cartwheel removal or centriole disengagement. Binds to and stabilizes centriolar microtubule. May be involved in ciliogenesis. This chain is Centrosomal protein of 295 kDa, found in Rattus norvegicus (Rat).